The sequence spans 100 residues: MANNMKSATFCKATWAIFLVALAILVQLKGSEAQAGGCASQLGNLNVCAPYVVPGAVNTNPSQECCAALSGVNHDCMCNTLRVASQLPSSCNLAALNCGN.

The signal sequence occupies residues 1–33 (MANNMKSATFCKATWAIFLVALAILVQLKGSEA). 4 cysteine pairs are disulfide-bonded: Cys-38–Cys-76, Cys-48–Cys-65, Cys-66–Cys-91, and Cys-78–Cys-98.

This sequence belongs to the A9/FIL1 family.

Its subcellular location is the secreted. The chain is Protein MEN-8 (MEN-8) from Silene latifolia (White campion).